The following is a 480-amino-acid chain: Lysosomal protective protein (480 aa).

A signal peptide spans 1-28; sequence MIRAAPPPLFLLLLLLLLLVSWASRGEA. 4 disulfide bridges follow: cysteine 88–cysteine 362, cysteine 240–cysteine 256, cysteine 241–cysteine 246, and cysteine 281–cysteine 331. N-linked (GlcNAc...) asparagine glycosylation is present at asparagine 145. The active site involves serine 178. N-linked (GlcNAc...) asparagine glycosylation is present at asparagine 333. Residues aspartate 400 and histidine 457 contribute to the active site.

It belongs to the peptidase S10 family. As to quaternary structure, heterodimer of a 32 kDa chain and a 20 kDa chain; disulfide-linked.

The protein localises to the lysosome. The catalysed reaction is Release of a C-terminal amino acid with broad specificity.. Protective protein appears to be essential for both the activity of beta-galactosidase and neuraminidase, it associates with these enzymes and exerts a protective function necessary for their stability and activity. This protein is also a carboxypeptidase and can deamidate tachykinins. The sequence is that of Lysosomal protective protein (CTSA) from Homo sapiens (Human).